A 507-amino-acid chain; its full sequence is Protein DETOXIFICATION 41 (507 aa).

Topologically, residues 1 to 62 (MSSTETYEPL…KLLWTLSGAS (62 aa)) are cytoplasmic. A helical membrane pass occupies residues 63–83 (IVVSVLNYMLSFVTVMFTGHL). At 84 to 92 (GSLQLAGAS) the chain is on the vacuolar side. A helical membrane pass occupies residues 93–113 (IATVGIQGLAYGIMLGMASAV). Residues 114–137 (QTVCGQAYGARQYSSMGIICQRAM) are Cytoplasmic-facing. Residues 138–158 (VLHLAAAVFLTFLYWYSGPIL) traverse the membrane as a helical segment. At 159–170 (KTMGQSVAIAHE) the chain is on the vacuolar side. The helical transmembrane segment at 171-191 (GQIFARGMIPQIYAFALACPM) threads the bilayer. Topologically, residues 192-202 (QRFLQAQNIVN) are cytoplasmic. The chain crosses the membrane as a helical span at residues 203–223 (PLAYMSLGVFLLHTLLTWLVT). Position 224 (N224) is a topological domain, vacuolar. The helical transmembrane segment at 225-245 (VLDFGLLGAALILSFSWWLLV) threads the bilayer. Residues 246–283 (AVNGMYILMSPNCKETWTGFSTRAFRGIWPYFKLTVAS) lie on the Cytoplasmic side of the membrane. A helical transmembrane segment spans residues 284 to 304 (AVMLCLEIWYNQGLVIISGLL). Residues 305–312 (SNPTISLD) are Vacuolar-facing. A helical transmembrane segment spans residues 313–333 (AISICMYYLNWDMQFMLGLSA). The Cytoplasmic portion of the chain corresponds to 334–355 (AISVRVSNELGAGNPRVAMLSV). The chain crosses the membrane as a helical span at residues 356 to 376 (VVVNITTVLISSVLCVIVLVF). Over 377–389 (RVGLSKAFTSDAE) the chain is Vacuolar. The helical transmembrane segment at 390-410 (VIAAVSDLFPLLAVSIFLNGI) threads the bilayer. The Cytoplasmic segment spans residues 411–425 (QPILSGVAIGSGWQA). Residues 426–446 (VVAYVNLVTYYVIGLPIGCVL) traverse the membrane as a helical segment. The Vacuolar portion of the chain corresponds to 447-453 (GFKTSLG). The chain crosses the membrane as a helical span at residues 454-474 (VAGIWWGMIAGVILQTLTLIV). Over 475-507 (LTLKTNWTSEVENAAQRVKTSATENQEMANAGV) the chain is Cytoplasmic.

Belongs to the multi antimicrobial extrusion (MATE) (TC 2.A.66.1) family. As to expression, expressed in reproductive tissues, from buds to siliques. Restricted to the endothelium layer of the ovule and the seed coat.

The protein localises to the vacuole membrane. Its pathway is secondary metabolite biosynthesis; flavonoid biosynthesis. In terms of biological role, acts as a flavonoid/H(+)-antiporter that control the vacuolar sequestration of flavonoids in the seed coat endothelium. Could transport the anthocyanin cyanidin-3-O-glucoside and epicatechin 3'-O-glucoside in vitro. The protein is Protein DETOXIFICATION 41 of Arabidopsis thaliana (Mouse-ear cress).